A 203-amino-acid polypeptide reads, in one-letter code: Thymidylate kinase (203 aa).

ATP is bound at residue 14 to 21; that stretch reads GGEGIGKS.

Belongs to the thymidylate kinase family.

It carries out the reaction dTMP + ATP = dTDP + ADP. Phosphorylation of dTMP to form dTDP in both de novo and salvage pathways of dTTP synthesis. The sequence is that of Thymidylate kinase from Rickettsia africae (strain ESF-5).